Reading from the N-terminus, the 400-residue chain is Octopine dehydrogenase (400 aa).

Residues 10–13 (GGNG) and 35–38 (FADE) each bind NADH. Pyruvate contacts are provided by glutamine 118 and threonine 143. Glutamine 118 serves as a coordination point for substrate. An NAD(+)-binding site is contributed by cysteine 148. Position 206 (methionine 206) interacts with L-arginine. A pyruvate-binding site is contributed by histidine 212. The active site involves histidine 212. Arginine 324 contributes to the NAD(+) binding site.

It belongs to the lysopine/nopaline/octopine/opine/vitopine dehydrogenases family.

The catalysed reaction is D-octopine + NAD(+) + H2O = L-arginine + pyruvate + NADH + H(+). Catalyzes the reverse reaction of octopine dehydrogenation. Acts on L-arginine in preference to other substrates. The sequence is that of Octopine dehydrogenase from Mizuhopecten yessoensis (Japanese scallop).